Reading from the N-terminus, the 210-residue chain is Probable septum site-determining protein MinC (210 aa).

It belongs to the MinC family. In terms of assembly, interacts with MinD and FtsZ.

Its function is as follows. Cell division inhibitor that blocks the formation of polar Z ring septums. Rapidly oscillates between the poles of the cell to destabilize FtsZ filaments that have formed before they mature into polar Z rings. Prevents FtsZ polymerization. In Clostridium novyi (strain NT), this protein is Probable septum site-determining protein MinC.